The sequence spans 144 residues: Putative sugar phosphate isomerase RT0290 (144 aa).

His12 serves as a coordination point for substrate. Catalysis depends on His101, which acts as the Proton donor. Position 135 (Arg135) interacts with substrate.

It belongs to the LacAB/RpiB family.

In Rickettsia typhi (strain ATCC VR-144 / Wilmington), this protein is Putative sugar phosphate isomerase RT0290.